The chain runs to 143 residues: Large ribosomal subunit protein uL13 (143 aa).

Belongs to the universal ribosomal protein uL13 family. As to quaternary structure, part of the 50S ribosomal subunit.

This protein is one of the early assembly proteins of the 50S ribosomal subunit, although it is not seen to bind rRNA by itself. It is important during the early stages of 50S assembly. This chain is Large ribosomal subunit protein uL13, found in Dichelobacter nodosus (strain VCS1703A).